We begin with the raw amino-acid sequence, 422 residues long: Histidine--tRNA ligase (422 aa).

Belongs to the class-II aminoacyl-tRNA synthetase family. Homodimer.

Its subcellular location is the cytoplasm. The catalysed reaction is tRNA(His) + L-histidine + ATP = L-histidyl-tRNA(His) + AMP + diphosphate + H(+). The polypeptide is Histidine--tRNA ligase (Vibrio cholerae serotype O1 (strain ATCC 39541 / Classical Ogawa 395 / O395)).